The sequence spans 269 residues: Hydroxyethylthiazole kinase (269 aa).

Methionine 45 is a binding site for substrate. The ATP site is built by arginine 121 and threonine 167. A substrate-binding site is contributed by glycine 194.

The protein belongs to the Thz kinase family. Mg(2+) serves as cofactor.

The enzyme catalyses 5-(2-hydroxyethyl)-4-methylthiazole + ATP = 4-methyl-5-(2-phosphooxyethyl)-thiazole + ADP + H(+). It participates in cofactor biosynthesis; thiamine diphosphate biosynthesis; 4-methyl-5-(2-phosphoethyl)-thiazole from 5-(2-hydroxyethyl)-4-methylthiazole: step 1/1. In terms of biological role, catalyzes the phosphorylation of the hydroxyl group of 4-methyl-5-beta-hydroxyethylthiazole (THZ). The protein is Hydroxyethylthiazole kinase of Bacillus mycoides (strain KBAB4) (Bacillus weihenstephanensis).